A 207-amino-acid chain; its full sequence is MSKVLIVDDHPAIRLAVRLLFERDGFTIVGEADNGAEALQVARKKSPDLAILDIGIPKIDGLEVIARLKSLKLDTKVLVLTRQNPAQFAPRCLQAGAMGFVSKRENLSELLLAAKAVLAGYIHFPTGALRSINQQSRDNEARMLESLSDREMTVLQYLANGNTNKAIAQQLFLSEKTVSTYKSRIMLKLNAHSLAGLIDFARRHELI.

One can recognise a Response regulatory domain in the interval 3–118; the sequence is KVLIVDDHPA…ELLLAAKAVL (116 aa). 2 positions are modified to 4-aspartylphosphate: Asp-9 and Asp-53. The region spanning 140-205 is the HTH luxR-type domain; it reads EARMLESLSD…GLIDFARRHE (66 aa). Positions 155–174 form a DNA-binding region, H-T-H motif; the sequence is LQYLANGNTNKAIAQQLFLS.

Functionally, probable transcriptional regulator. This Pseudomonas aeruginosa (strain ATCC 15692 / DSM 22644 / CIP 104116 / JCM 14847 / LMG 12228 / 1C / PRS 101 / PAO1) protein is Putative transcriptional regulator.